We begin with the raw amino-acid sequence, 149 residues long: D-aminoacyl-tRNA deacylase (149 aa).

The Gly-cisPro motif, important for rejection of L-amino acids signature appears at 137-138 (GP).

It belongs to the DTD family. As to quaternary structure, homodimer.

Its subcellular location is the cytoplasm. The enzyme catalyses glycyl-tRNA(Ala) + H2O = tRNA(Ala) + glycine + H(+). The catalysed reaction is a D-aminoacyl-tRNA + H2O = a tRNA + a D-alpha-amino acid + H(+). In terms of biological role, an aminoacyl-tRNA editing enzyme that deacylates mischarged D-aminoacyl-tRNAs. Also deacylates mischarged glycyl-tRNA(Ala), protecting cells against glycine mischarging by AlaRS. Acts via tRNA-based rather than protein-based catalysis; rejects L-amino acids rather than detecting D-amino acids in the active site. By recycling D-aminoacyl-tRNA to D-amino acids and free tRNA molecules, this enzyme counteracts the toxicity associated with the formation of D-aminoacyl-tRNA entities in vivo and helps enforce protein L-homochirality. This is D-aminoacyl-tRNA deacylase from Clostridium tetani (strain Massachusetts / E88).